The primary structure comprises 400 residues: Aspartate aminotransferase (400 aa).

Residues Gly-42 and Asn-180 each coordinate L-aspartate. N6-(pyridoxal phosphate)lysine is present on Lys-241. Arg-373 is a binding site for L-aspartate.

The protein belongs to the class-I pyridoxal-phosphate-dependent aminotransferase family. As to quaternary structure, homodimer. Pyridoxal 5'-phosphate serves as cofactor.

It localises to the cytoplasm. The enzyme catalyses L-aspartate + 2-oxoglutarate = oxaloacetate + L-glutamate. The protein is Aspartate aminotransferase (aspC) of Sulfolobus acidocaldarius (strain ATCC 33909 / DSM 639 / JCM 8929 / NBRC 15157 / NCIMB 11770).